Reading from the N-terminus, the 91-residue chain is Acylphosphatase (91 aa).

Positions 3–91 (CLRAIVKGKV…ANYSDFRIKH (89 aa)) constitute an Acylphosphatase-like domain. Active-site residues include R18 and N36.

The protein belongs to the acylphosphatase family.

The catalysed reaction is an acyl phosphate + H2O = a carboxylate + phosphate + H(+). The sequence is that of Acylphosphatase (acyP) from Dehalococcoides mccartyi (strain CBDB1).